The following is a 466-amino-acid chain: MSVVPVADVLQGRVAVDQEVTVRGWVRTRRDSKAGISFLAVYDGSCFDPVQAVINNSLPNYNDDVLHLTTGCSVIVTGVVVASPGQGQSFELQATAIEVTGWVEDPDTYPMAAKRHSIEYLREVAHLRPRTNMIGAVARVRHTLAQALHRFFDEQGYFWVSTPLITASDTEGAGEMFRVSTLDLENLPRTPEGKVDFDKDFFGKEAFLTVSGQLNGETYACALSKIYTFGPTFRAENSNTSRHLAEFWMLEPEVAFANLNDVAGLAEAMLKYVFKAVLEERADDMKFFAERVDSDAVARLERFVSADFAQVDYTDAVAILEKCGEKFENPVYWGVDLSSEHERYLAEKHFKAPVVVKNYPKDIKAFYMRLNEDGKTVAAMDVLAPGIGEIIGGSQREERLDVLDARMEEMGLNPADYSWYRDLRRYGTVPHSGFGLGFERLIAYVTGVQNVRDVIAFPRTPRNASF.

This sequence belongs to the class-II aminoacyl-tRNA synthetase family. In terms of assembly, homodimer.

It localises to the cytoplasm. The catalysed reaction is tRNA(Asn) + L-asparagine + ATP = L-asparaginyl-tRNA(Asn) + AMP + diphosphate + H(+). The protein is Asparagine--tRNA ligase of Enterobacter sp. (strain 638).